The following is a 235-amino-acid chain: Modulator of macroautophagy TMEM150B (235 aa).

At 1–8 (MWGYLSLL) the chain is on the cytoplasmic side. Residues 9–29 (PMCLAFWAIAGIWTVFSLAVV) form a helical membrane-spanning segment. The Extracellular segment spans residues 30–51 (NKAVNLTDGFPYISVCGNVPPQ). Residue Asn34 is glycosylated (N-linked (GlcNAc...) asparagine). A helical transmembrane segment spans residues 52-72 (SCIFSQVLNIGAASAAWICIL). Residues 73 to 88 (RYYQLRDWGVRKWHNQ) lie on the Cytoplasmic side of the membrane. The helical transmembrane segment at 89-109 (VILWTGLLCALGTSIVGNFQE) threads the bilayer. At 110–116 (KNQRATH) the chain is on the extracellular side. The chain crosses the membrane as a helical span at residues 117 to 137 (LTGAFLAFFVGIVYFWLQLFL). The Cytoplasmic segment spans residues 138–156 (SWRMKNLPQPGAPWIGPLR). Residues 157–177 (LVLCSACFILEVAMVVLHSWS) form a helical membrane-spanning segment. At 178–180 (MRS) the chain is on the extracellular side. A helical transmembrane segment spans residues 181-201 (VSAICEWVAAMLLFILFGLLA). Over 202 to 235 (VDFSRLDSCTLCLQPGSGSLRPPPDSPTSLHVQL) the chain is Cytoplasmic.

The protein belongs to the DRAM/TMEM150 family.

The protein resides in the cell membrane. The protein localises to the endosome membrane. Its subcellular location is the cytoplasmic vesicle. It is found in the autophagosome membrane. Modulator of macroautophagy that causes accumulation of autophagosomes under basal conditions and enhances autophagic flux. Represses cell death and promotes long-term clonogenic survival of cells grown in the absence of glucose in a macroautophagy-independent manner. May have some role in extracellular matrix engulfment or growth factor receptor recycling, both of which can modulate cell survival. This chain is Modulator of macroautophagy TMEM150B, found in Bos taurus (Bovine).